We begin with the raw amino-acid sequence, 290 residues long: MAFVTMKHLLAEAKREHYAVGQFNINGLQWTKAILQAAQKEQSPVIAAASDRLVDYLGGFKTISAMVGALMEEMAITVPVVLHLDHGSSAERCRQAIDAGFSSVMIDGSHHPIDENIAMTKEVADYAAKHGVSVEAEVGTVGGMEDGLVGGVRYADVAECERIVKETNIDALAAALGSVHGKYQGEPNLGFKEMEAISRMTDIPLVLHGASGIPQEQIKKAITLGHAKININTECMVAWTDETRRMFQKNGDLYEPRGYMTPGIEAVEETVRSKMREFGSAGKAVKQQVG.

Residue aspartate 85 is the Proton donor of the active site. Residues histidine 86 and histidine 180 each coordinate Zn(2+). Glycine 181 serves as a coordination point for dihydroxyacetone phosphate. Position 208 (histidine 208) interacts with Zn(2+). Residues 209 to 211 (GAS) and 230 to 233 (NINT) contribute to the dihydroxyacetone phosphate site. Threonine 233 carries the post-translational modification Phosphothreonine.

The protein belongs to the class II fructose-bisphosphate aldolase family. IolJ subfamily. Zn(2+) is required as a cofactor.

The catalysed reaction is 6-phospho-5-dehydro-2-deoxy-D-gluconate = 3-oxopropanoate + dihydroxyacetone phosphate. It functions in the pathway polyol metabolism; myo-inositol degradation into acetyl-CoA; acetyl-CoA from myo-inositol: step 6/7. Functionally, produces dihydroxyacetone phosphate (DHAP or glycerone phosphate) and malonic semialdehyde (MSA or 3-oxopropanoate) from 6-phospho-5-dehydro-2-deoxy-D-gluconate (DKGP). This chain is 6-phospho-5-dehydro-2-deoxy-D-gluconate aldolase (iolJ), found in Bacillus velezensis (strain DSM 23117 / BGSC 10A6 / LMG 26770 / FZB42) (Bacillus amyloliquefaciens subsp. plantarum).